A 426-amino-acid polypeptide reads, in one-letter code: Protein arginine N-methyltransferase 2 (426 aa).

Disordered regions lie at residues Asp-65–Ser-88 and Asp-155–Ala-175. The segment covering Asn-73–Ser-88 has biased composition (polar residues). The segment covering Asp-155–Gln-168 has biased composition (acidic residues). In terms of domain architecture, RMT2 spans Pro-207 to Asp-426. Residues Tyr-214, Met-243, His-263–Val-268, Glu-284–His-286, Trp-311–Gln-312, and Asp-331 contribute to the S-adenosyl-L-methionine site.

This sequence belongs to the class I-like SAM-binding methyltransferase superfamily. RMT2 methyltransferase family. In terms of assembly, monomer.

Its subcellular location is the cytoplasm. It is found in the nucleus. S-adenosyl-L-methionine-dependent protein-arginine N-methyltransferase that methylates the delta-nitrogen atom of arginine residues to form N5-methylarginine (type IV) in target proteins. Monomethylates ribosomal protein L12. The sequence is that of Protein arginine N-methyltransferase 2 from Emericella nidulans (strain FGSC A4 / ATCC 38163 / CBS 112.46 / NRRL 194 / M139) (Aspergillus nidulans).